Here is a 445-residue protein sequence, read N- to C-terminus: Fasciclin-like arabinogalactan protein 16 (445 aa).

The N-terminal stretch at 1–23 is a signal peptide; that stretch reads MDSSYGATKFLLLLFLTTSIATA. FAS1 domains follow at residues 35–173 and 257–400; these read NSNS…ERLL and VKDF…DGVL. N-linked (GlcNAc...) asparagine glycans are attached at residues N72 and N279.

This sequence belongs to the fasciclin-like AGP family.

The protein localises to the secreted. Functionally, may be a cell surface adhesion protein. This is Fasciclin-like arabinogalactan protein 16 (FLA16) from Arabidopsis thaliana (Mouse-ear cress).